The following is a 305-amino-acid chain: CRISPR-associated endonuclease Cas1 (305 aa).

Residues 96–278 (SDKLLYQAKL…EDVLAAGEIQ (183 aa)) are sufficient for cleavage of ssRNA, ssDNA and Holliday junction DNA. 3 residues coordinate Mg(2+): Glu-141, His-208, and Asp-221. The tract at residues 278–305 (QPPAPPEDAQPVAIPLPVSLGDAGHRSS) is disordered.

This sequence belongs to the CRISPR-associated endonuclease Cas1 family. In terms of assembly, homodimer. Part of the Cas1-Cas2 complex. Interacts with RecB, RecC, RuvB, CasC and CasE. Forms a hexamer with 2 Cas1 dimers sandwiching a Cas2 dimer. The DNA lies across a flat surface extending from 1 Cas1 dimer, across the Cas2 dimer and contacting the other Cas1 dimer. Only 1 Cas1 protein from each dimer is catalytic, the other interacts with the Cas2 dimer and possibly target DNA. Mg(2+) is required as a cofactor.

The protein localises to the cytoplasm. With respect to regulation, nuclease activity partially inhibited by CasE. In terms of biological role, CRISPR (clustered regularly interspaced short palindromic repeat), is an adaptive immune system that provides protection against mobile genetic elements (viruses, transposable elements and conjugative plasmids). CRISPR clusters contain sequences complementary to antecedent mobile elements and target invading nucleic acids. CRISPR clusters are transcribed and processed into CRISPR RNA (crRNA). The Cas1-Cas2 complex is involved in CRISPR adaptation, the first stage of CRISPR immunity, being required for the addition/removal of CRISPR spacers at the leader end of the CRISPR locus. The Cas1-Cas2 complex introduces staggered nicks into both strands of the CRISPR array near the leader repeat and joins the 5'-ends of the repeat strands with the 3'-ends of the new spacer sequence. Spacer DNA integration requires supercoiled target DNA and 3'-OH ends on the inserted (spacer) DNA and probably initiates with a nucleophilic attack of the C 3'-OH end of the protospacer on the minus strand of the first repeat sequence. Expression of Cas1-Cas2 in a strain lacking both genes permits spacer acquisition. Non-specifically binds DNA; the Cas1-Cas2 complex preferentially binds CRISPR-locus DNA. Highest binding is seen to a dual forked DNA complex with 3'-overhangs and a protospacer-adjacent motif-complement specifically positioned. The protospacer DNA lies across a flat surface extending from 1 Cas1 dimer, across the Cas2 dimer and contacting the other Cas1 dimer; the 23 bp-long ds section of the DNA is bracketed by 1 Tyr-22 from each of the Cas1 dimers. Cas1 cuts within the 3'-overhang, to generate a 33-nucleotide DNA that is probably incorporated into the CRISPR leader by a cut-and-paste mechanism. Cas1 alone endonucleolytically cleaves linear ssRNA, ssDNA and short (34 base) dsDNA as well as branched DNA substrates such as Holliday junctions, replication forks and 5'-flap DNA substrates. In vitro catalyzes a concerted transesterification reaction on branched DNA, as would be expected during integration of protospacers into the CRISPR leader sequence; Cas2 is not required in vitro. This reaction requires a 3'-OH group at the branch point. Genetic interactions suggest Cas1 interacts with components of the RecBC and RuvB DNA repair systems. The polypeptide is CRISPR-associated endonuclease Cas1 (ygbT) (Escherichia coli (strain K12)).